The following is a 275-amino-acid chain: Glycerol-3-phosphate dehydrogenase [NAD(P)+] (275 aa).

NADPH is bound by residues W12, R32, and K105. K105, G133, and T135 together coordinate sn-glycerol 3-phosphate. Residue A137 coordinates NADPH. Residues K188, D241, S251, R252, and N253 each contribute to the sn-glycerol 3-phosphate site. The Proton acceptor role is filled by K188. An NADPH-binding site is contributed by R252.

The protein belongs to the NAD-dependent glycerol-3-phosphate dehydrogenase family.

The protein localises to the cytoplasm. The catalysed reaction is sn-glycerol 3-phosphate + NAD(+) = dihydroxyacetone phosphate + NADH + H(+). It carries out the reaction sn-glycerol 3-phosphate + NADP(+) = dihydroxyacetone phosphate + NADPH + H(+). The protein operates within membrane lipid metabolism; glycerophospholipid metabolism. Its function is as follows. Catalyzes the reduction of the glycolytic intermediate dihydroxyacetone phosphate (DHAP) to sn-glycerol 3-phosphate (G3P), the key precursor for phospholipid synthesis. The sequence is that of Glycerol-3-phosphate dehydrogenase [NAD(P)+] from Paramagnetospirillum magneticum (strain ATCC 700264 / AMB-1) (Magnetospirillum magneticum).